Reading from the N-terminus, the 612-residue chain is Arginine--tRNA ligase (612 aa).

The 'HIGH' region motif lies at 152-162 (PNIAKEMHVGH).

This sequence belongs to the class-I aminoacyl-tRNA synthetase family. Monomer.

Its subcellular location is the cytoplasm. The enzyme catalyses tRNA(Arg) + L-arginine + ATP = L-arginyl-tRNA(Arg) + AMP + diphosphate. The polypeptide is Arginine--tRNA ligase (Prochlorococcus marinus (strain MIT 9313)).